The sequence spans 374 residues: Probable trehalose-phosphate phosphatase 9 (374 aa).

This sequence belongs to the trehalose phosphatase family. The cofactor is a divalent metal cation.

It carries out the reaction alpha,alpha-trehalose 6-phosphate + H2O = alpha,alpha-trehalose + phosphate. Its pathway is glycan biosynthesis; trehalose biosynthesis. Removes the phosphate from trehalose 6-phosphate to produce free trehalose. Trehalose accumulation in plant may improve abiotic stress tolerance. This chain is Probable trehalose-phosphate phosphatase 9 (TPP9), found in Oryza sativa subsp. japonica (Rice).